A 376-amino-acid chain; its full sequence is WD repeat-containing protein 86 (376 aa).

WD repeat units follow at residues 13–52 (DHRG…CCAL), 55–94 (GHES…QVYR), 95–132 (GHTS…MSRE), 135–188 (GHRN…CHQT), 191–232 (GHTG…RVFR), 234–272 (HRGS…RTFT), 274–310 (HRRN…LRRV), and 313–350 (GHTF…GAPR).

In Homo sapiens (Human), this protein is WD repeat-containing protein 86 (WDR86).